Here is an 82-residue protein sequence, read N- to C-terminus: U17-hexatoxin-Hi1a (82 aa).

An N-terminal signal peptide occupies residues 1–21; sequence MKTIFAVTLLLFAIYVPECMP. Cystine bridges form between Cys22/Cys33, Cys27/Cys48, Cys32/Cys61, Cys58/Cys69, and Cys63/Cys75.

In terms of tissue distribution, expressed by the venom gland.

The protein resides in the secreted. Probable ion channel inhibitor. This Hadronyche infensa (Fraser island funnel-web spider) protein is U17-hexatoxin-Hi1a.